Here is a 303-residue protein sequence, read N- to C-terminus: Signal recognition particle receptor FtsY (303 aa).

Residues 108–115 (GVNGVGKT), 190–194 (DTAGR), and 254–257 (TKLD) each bind GTP.

It belongs to the GTP-binding SRP family. FtsY subfamily. As to quaternary structure, part of the signal recognition particle protein translocation system, which is composed of SRP and FtsY. SRP is a ribonucleoprotein composed of Ffh and a 4.5S RNA molecule.

The protein resides in the cell inner membrane. It localises to the cytoplasm. The enzyme catalyses GTP + H2O = GDP + phosphate + H(+). Involved in targeting and insertion of nascent membrane proteins into the cytoplasmic membrane. Acts as a receptor for the complex formed by the signal recognition particle (SRP) and the ribosome-nascent chain (RNC). Interaction with SRP-RNC leads to the transfer of the RNC complex to the Sec translocase for insertion into the membrane, the hydrolysis of GTP by both Ffh and FtsY, and the dissociation of the SRP-FtsY complex into the individual components. The sequence is that of Signal recognition particle receptor FtsY from Rickettsia prowazekii (strain Madrid E).